Reading from the N-terminus, the 153-residue chain is Putative nuclear shuttle protein (153 aa).

The protein belongs to the nanoviridae nuclear shuttle protein family.

The protein resides in the host nucleus. Its subcellular location is the host cytoplasm. Its function is as follows. Putative nuclear shuttle protein. The chain is Putative nuclear shuttle protein (DNA-N) from Faba bean necrotic yellows virus (isolate Syrian SV292-88) (FBNYV).